The sequence spans 557 residues: Hydroxylamine reductase (557 aa).

[4Fe-4S] cluster-binding residues include Cys-3, Cys-6, Cys-19, and Cys-26. Residues His-253, Glu-277, Cys-321, Cys-408, Cys-436, Cys-461, Glu-495, and Lys-497 each contribute to the hybrid [4Fe-2O-2S] cluster site. Cys-408 carries the post-translational modification Cysteine persulfide.

It belongs to the HCP family. [4Fe-4S] cluster is required as a cofactor. The cofactor is hybrid [4Fe-2O-2S] cluster.

It is found in the cytoplasm. The enzyme catalyses A + NH4(+) + H2O = hydroxylamine + AH2 + H(+). In terms of biological role, catalyzes the reduction of hydroxylamine to form NH(3) and H(2)O. The chain is Hydroxylamine reductase from Acidiphilium cryptum (strain JF-5).